The sequence spans 107 residues: uncharacterized protein (107 aa).

The next 3 helical transmembrane spans lie at 20–40 (FISL…EVGI), 49–69 (PAIL…ISTV), and 86–106 (VVML…KLFL).

Its subcellular location is the membrane. This is an uncharacterized protein from Saccharomyces cerevisiae (strain ATCC 204508 / S288c) (Baker's yeast).